A 288-amino-acid chain; its full sequence is Bis(5'-nucleosyl)-tetraphosphatase, symmetrical (288 aa).

Belongs to the Ap4A hydrolase family.

It catalyses the reaction P(1),P(4)-bis(5'-adenosyl) tetraphosphate + H2O = 2 ADP + 2 H(+). Functionally, hydrolyzes diadenosine 5',5'''-P1,P4-tetraphosphate to yield ADP. The protein is Bis(5'-nucleosyl)-tetraphosphatase, symmetrical of Pseudomonas putida (strain GB-1).